The sequence spans 682 residues: MGGALSTDDPEQRASSVEELNQRLAHRFAAKCFEPLELTHLKENFFSRALDQHGIRYWNEEILSEFLGIPDGAGSAAAATSDGSLDAGPVIFRMVSYLGAFPFQNTMAPTVLTFESMVKVVVLLTERYGKVLKRGKKDRIKLLFGSLADVGRRDIITQLKEATEDSLESIGPFDPKSASPSTHNTGFLVDQPLNDEDEEDDDDLAIAALESLDAIEVFKHDQRIDKTVYESKISLTTFRRLLTLLLVTAPLRPLGRVSKFTTGLSKPSLDAVHEQVDSILAALEPGEASDGIGYKSFSKLVSTSLPYLFDPLTPLFEHLLFSKNLDLSRKRDSQTTNGLTNKPVPTPPSTPPISPPLSPVISTGGFDSRILNPAVLSHLSFFVSTNVHIPNIFRNRTHLHPVFSSTEHGESLTSFSHHVMTWQAPSILLVRGAVVSESSEEQLTTIGAYLPQPWKQTSSYSSRRSSEVPDPSTLPCLFELSPVHTVLQGSPSFSSLKPNMPVSHFSTKTGIAIGCVIPPSSRKSLGSDLHPKPAGGGSLLIDSALENATFIVSNGLNGPGVFLPPGISPVLSSTSLTASVASMSSSNQNITKSISIYNLEVWGIIPSTSLATQLDGSGSPIEKRDAISLQRAQWDFEAREAERRQAINMKVGGGEADVPTGRALLEMAGIIGDSYYSGHHRH.

Disordered regions lie at residues 167 to 198 (LESI…DEDE) and 331 to 358 (RDSQ…PPLS). The segment covering 344 to 358 (VPTPPSTPPISPPLS) has biased composition (pro residues). The region spanning 369–605 (RILNPAVLSH…IYNLEVWGII (237 aa)) is the TLDc domain.

Belongs to the RTC5 family.

Its subcellular location is the cytoplasm. May be involved in a process influencing telomere capping. The sequence is that of Restriction of telomere capping protein 5 (RTC5) from Ajellomyces capsulatus (strain NAm1 / WU24) (Darling's disease fungus).